Reading from the N-terminus, the 149-residue chain is Large ribosomal subunit protein uL13 (149 aa).

The protein belongs to the universal ribosomal protein uL13 family. As to quaternary structure, part of the 50S ribosomal subunit.

Its function is as follows. This protein is one of the early assembly proteins of the 50S ribosomal subunit, although it is not seen to bind rRNA by itself. It is important during the early stages of 50S assembly. The protein is Large ribosomal subunit protein uL13 of Cyanothece sp. (strain PCC 7425 / ATCC 29141).